A 490-amino-acid chain; its full sequence is Betaine aldehyde dehydrogenase (490 aa).

K(+)-binding residues include Thr26, Ile27, and Asp93. 150 to 152 (GAW) provides a ligand contact to NAD(+). Catalysis depends on Lys162, which acts as the Charge relay system. 176-179 (KPSE) contributes to the NAD(+) binding site. Residue Val180 participates in K(+) binding. Residue 230-233 (GVAS) coordinates NAD(+). Leu246 contributes to the K(+) binding site. The active-site Proton acceptor is Glu252. The NAD(+) site is built by Gly254, Cys286, and Glu387. The active-site Nucleophile is the Cys286. Residue Cys286 is modified to Cysteine sulfenic acid (-SOH). 2 residues coordinate K(+): Lys457 and Gly460. The active-site Charge relay system is the Glu464.

It belongs to the aldehyde dehydrogenase family. In terms of assembly, dimer of dimers. K(+) serves as cofactor.

The catalysed reaction is betaine aldehyde + NAD(+) + H2O = glycine betaine + NADH + 2 H(+). It functions in the pathway amine and polyamine biosynthesis; betaine biosynthesis via choline pathway; betaine from betaine aldehyde: step 1/1. Involved in the biosynthesis of the osmoprotectant glycine betaine. Catalyzes the irreversible oxidation of betaine aldehyde to the corresponding acid. The protein is Betaine aldehyde dehydrogenase of Klebsiella pneumoniae (strain 342).